We begin with the raw amino-acid sequence, 409 residues long: Dihydroorotase (409 aa).

Positions 57 and 59 each coordinate Zn(2+). Residues 59-61 and asparagine 91 each bind substrate; that span reads HLR. Zn(2+)-binding residues include lysine 139, histidine 168, histidine 208, and aspartate 276. Lysine 139 is subject to N6-carboxylysine. Aspartate 276 is an active-site residue. Substrate is bound by residues histidine 280 and 290–291; that span reads AG.

It belongs to the metallo-dependent hydrolases superfamily. DHOase family. Class I DHOase subfamily. Requires Zn(2+) as cofactor.

The enzyme catalyses (S)-dihydroorotate + H2O = N-carbamoyl-L-aspartate + H(+). It participates in pyrimidine metabolism; UMP biosynthesis via de novo pathway; (S)-dihydroorotate from bicarbonate: step 3/3. In terms of biological role, catalyzes the reversible cyclization of carbamoyl aspartate to dihydroorotate. The sequence is that of Dihydroorotase from Thermococcus kodakarensis (strain ATCC BAA-918 / JCM 12380 / KOD1) (Pyrococcus kodakaraensis (strain KOD1)).